Consider the following 311-residue polypeptide: Heparan sulfate glucosamine 3-O-sulfotransferase 1 (311 aa).

The N-terminal stretch at 1–20 (MTLLLLGAVLLVAQPQLVHS) is a signal peptide. Residue Asn52 is glycosylated (N-linked (GlcNAc...) asparagine). 3'-phosphoadenylyl sulfate contacts are provided by residues 68-72 (KGGTR), Arg151, and Ser159. Residues Asn196, Asn246, and Asn253 are each glycosylated (N-linked (GlcNAc...) asparagine). Tyr259 is a binding site for 3'-phosphoadenylyl sulfate. Cysteines 260 and 269 form a disulfide. 274 to 278 (KGRAH) contacts 3'-phosphoadenylyl sulfate.

This sequence belongs to the sulfotransferase 1 family.

The protein localises to the golgi apparatus lumen. The catalysed reaction is alpha-D-glucosaminyl-[heparan sulfate](n) + 3'-phosphoadenylyl sulfate = 3-sulfo-alpha-D-glucosaminyl-[heparan sulfate](n) + adenosine 3',5'-bisphosphate + H(+). Sulfotransferase that utilizes 3'-phospho-5'-adenylyl sulfate (PAPS) to catalyze the transfer of a sulfo group to position 3 of glucosamine residues in heparan. Catalyzes the rate limiting step in the biosynthesis of heparan sulfate (HSact). This modification is a crucial step in the biosynthesis of anticoagulant heparan sulfate as it completes the structure of the antithrombin pentasaccharide binding site. In Mus musculus (Mouse), this protein is Heparan sulfate glucosamine 3-O-sulfotransferase 1 (Hs3st1).